Reading from the N-terminus, the 212-residue chain is Phosphatidylserine decarboxylase proenzyme (212 aa).

The Schiff-base intermediate with substrate; via pyruvic acid role is filled by S182. A Pyruvic acid (Ser); by autocatalysis modification is found at S182.

The protein belongs to the phosphatidylserine decarboxylase family. PSD-A subfamily. As to quaternary structure, heterodimer of a large membrane-associated beta subunit and a small pyruvoyl-containing alpha subunit. It depends on pyruvate as a cofactor. In terms of processing, is synthesized initially as an inactive proenzyme. Formation of the active enzyme involves a self-maturation process in which the active site pyruvoyl group is generated from an internal serine residue via an autocatalytic post-translational modification. Two non-identical subunits are generated from the proenzyme in this reaction, and the pyruvate is formed at the N-terminus of the alpha chain, which is derived from the carboxyl end of the proenzyme. The post-translation cleavage follows an unusual pathway, termed non-hydrolytic serinolysis, in which the side chain hydroxyl group of the serine supplies its oxygen atom to form the C-terminus of the beta chain, while the remainder of the serine residue undergoes an oxidative deamination to produce ammonia and the pyruvoyl prosthetic group on the alpha chain.

It localises to the cell membrane. It catalyses the reaction a 1,2-diacyl-sn-glycero-3-phospho-L-serine + H(+) = a 1,2-diacyl-sn-glycero-3-phosphoethanolamine + CO2. Its pathway is phospholipid metabolism; phosphatidylethanolamine biosynthesis; phosphatidylethanolamine from CDP-diacylglycerol: step 2/2. Functionally, catalyzes the formation of phosphatidylethanolamine (PtdEtn) from phosphatidylserine (PtdSer). In Paraburkholderia phymatum (strain DSM 17167 / CIP 108236 / LMG 21445 / STM815) (Burkholderia phymatum), this protein is Phosphatidylserine decarboxylase proenzyme.